A 506-amino-acid chain; its full sequence is Protein nucleotidyltransferase YdiU (506 aa).

Residues Gly-95, Gly-97, Arg-98, Lys-118, Asp-130, Gly-131, Arg-181, and Arg-188 each coordinate ATP. The active-site Proton acceptor is Asp-257. The Mg(2+) site is built by Asn-258 and Asp-267. Asp-267 provides a ligand contact to ATP. A disordered region spans residues 487–506 (KHYQDAPTPDQRVKQTFCGT).

The protein belongs to the SELO family. Mg(2+) serves as cofactor. Mn(2+) is required as a cofactor.

The enzyme catalyses L-seryl-[protein] + ATP = 3-O-(5'-adenylyl)-L-seryl-[protein] + diphosphate. It catalyses the reaction L-threonyl-[protein] + ATP = 3-O-(5'-adenylyl)-L-threonyl-[protein] + diphosphate. The catalysed reaction is L-tyrosyl-[protein] + ATP = O-(5'-adenylyl)-L-tyrosyl-[protein] + diphosphate. It carries out the reaction L-histidyl-[protein] + UTP = N(tele)-(5'-uridylyl)-L-histidyl-[protein] + diphosphate. The enzyme catalyses L-seryl-[protein] + UTP = O-(5'-uridylyl)-L-seryl-[protein] + diphosphate. It catalyses the reaction L-tyrosyl-[protein] + UTP = O-(5'-uridylyl)-L-tyrosyl-[protein] + diphosphate. Functionally, nucleotidyltransferase involved in the post-translational modification of proteins. It can catalyze the addition of adenosine monophosphate (AMP) or uridine monophosphate (UMP) to a protein, resulting in modifications known as AMPylation and UMPylation. In Shewanella denitrificans (strain OS217 / ATCC BAA-1090 / DSM 15013), this protein is Protein nucleotidyltransferase YdiU.